Reading from the N-terminus, the 224-residue chain is UPF0758 protein lmo1549 (224 aa).

An MPN domain is found at 102 to 224 (VVRCPEDAVK…YISLKEKGYF (123 aa)). His173, His175, and Asp186 together coordinate Zn(2+). The JAMM motif motif lies at 173–186 (HNHPSGDPTPSSED).

The protein belongs to the UPF0758 family.

In Listeria monocytogenes serovar 1/2a (strain ATCC BAA-679 / EGD-e), this protein is UPF0758 protein lmo1549.